Reading from the N-terminus, the 269-residue chain is Putative pyruvate, phosphate dikinase regulatory protein (269 aa).

Position 147–154 (147–154) interacts with ADP; sequence GVSRTSKT.

Belongs to the pyruvate, phosphate/water dikinase regulatory protein family. PDRP subfamily.

It carries out the reaction N(tele)-phospho-L-histidyl/L-threonyl-[pyruvate, phosphate dikinase] + ADP = N(tele)-phospho-L-histidyl/O-phospho-L-threonyl-[pyruvate, phosphate dikinase] + AMP + H(+). The catalysed reaction is N(tele)-phospho-L-histidyl/O-phospho-L-threonyl-[pyruvate, phosphate dikinase] + phosphate + H(+) = N(tele)-phospho-L-histidyl/L-threonyl-[pyruvate, phosphate dikinase] + diphosphate. Its function is as follows. Bifunctional serine/threonine kinase and phosphorylase involved in the regulation of the pyruvate, phosphate dikinase (PPDK) by catalyzing its phosphorylation/dephosphorylation. This chain is Putative pyruvate, phosphate dikinase regulatory protein, found in Geotalea daltonii (strain DSM 22248 / JCM 15807 / FRC-32) (Geobacter daltonii).